The sequence spans 500 residues: Phosphatidylserine decarboxylase proenzyme 1, mitochondrial (500 aa).

Residues 1–48 (MSIMPVKNALAQGRTLLMGRMPAVKFSTRMQLRNRTAVLWNRKFSTRL) constitute a mitochondrion; not cleaved when targeted to the endoplasmic reticulum transit peptide. N-linked (GlcNAc...) asparagine glycosylation is present at asparagine 34. Residues 45-79 (STRLFVQQRRSSGEIVDRAKAAAANSGRKQVSMKW) lie on the Mitochondrial matrix side of the membrane. An enables targeting to the endoplasmic reticulum in addition to mitochondria region spans residues 57–101 (GEIVDRAKAAAANSGRKQVSMKWVVLTSFTIVLGTILLVSRNDST). Residues 80–98 (VVLTSFTIVLGTILLVSRN) traverse the membrane as a helical segment. The Mitochondrial intermembrane portion of the chain corresponds to 99–500 (DSTEEDATEG…LGIIGKNDLK (402 aa)). Residues aspartate 210, histidine 348, and serine 463 each act as charge relay system; for autoendoproteolytic cleavage activity in the active site. Serine 463 acts as the Schiff-base intermediate with substrate; via pyruvic acid; for decarboxylase activity in catalysis. A Pyruvic acid (Ser); by autocatalysis modification is found at serine 463. The interval 475 to 492 (FKFDVRVGDKVKMGQKLG) is required for processing and stability.

The protein belongs to the phosphatidylserine decarboxylase family. PSD-B subfamily. Eukaryotic type I sub-subfamily. Heterodimer of a large membrane-associated beta subunit and a small pyruvoyl-containing alpha subunit. It depends on pyruvate as a cofactor. In terms of processing, glycosylated at Asn-34 in the endoplasmic reticulum. Post-translationally, the precursor is imported via the TOM complex into mitochondria, where the N-terminal presequence is cleaved by the matrix-located proteases MPP (MAS1-MAS2) and OCT1. Is synthesized initially as an inactive proenzyme. Formation of the active enzyme involves a self-maturation process in which the active site pyruvoyl group is generated from an internal serine residue via an autocatalytic post-translational modification. Two non-identical subunits are generated from the proenzyme in this reaction, and the pyruvate is formed at the N-terminus of the alpha chain, which is derived from the carboxyl end of the proenzyme. The autoendoproteolytic cleavage occurs by a canonical serine protease mechanism, in which the side chain hydroxyl group of the serine supplies its oxygen atom to form the C-terminus of the beta chain, while the remainder of the serine residue undergoes an oxidative deamination to produce ammonia and the pyruvoyl prosthetic group on the alpha chain. During this reaction, the Ser that is part of the protease active site of the proenzyme becomes the pyruvoyl prosthetic group, which constitutes an essential element of the active site of the mature decarboxylase.

It is found in the mitochondrion inner membrane. It localises to the lipid droplet. The protein localises to the endoplasmic reticulum membrane. The enzyme catalyses a 1,2-diacyl-sn-glycero-3-phospho-L-serine + H(+) = a 1,2-diacyl-sn-glycero-3-phosphoethanolamine + CO2. Its pathway is phospholipid metabolism; phosphatidylethanolamine biosynthesis; phosphatidylethanolamine from CDP-diacylglycerol: step 2/2. Catalyzes the formation of phosphatidylethanolamine (PtdEtn) from phosphatidylserine (PtdSer). Plays a central role in phospholipid metabolism and in the interorganelle trafficking of phosphatidylserine. Phosphatidylethanolamine formed in the mitochondria is exported to other membranes to fullfill their requirements for PtdEtn. Required for normal mitochondrial morphology and proper mitochondrial fusion during yeast mating. Involved in lipid droplet biogenesis at the endoplasmic reticulum membrane. Required for induction of mitophagy during nitrogen starvation. Appears to play a specific role in supporting respiratory complex III activity. The polypeptide is Phosphatidylserine decarboxylase proenzyme 1, mitochondrial (Saccharomyces cerevisiae (strain ATCC 204508 / S288c) (Baker's yeast)).